The chain runs to 215 residues: Ribosomal RNA small subunit methyltransferase G (215 aa).

Residues Gly-73, Leu-78, 125-126, and Arg-140 contribute to the S-adenosyl-L-methionine site; that span reads AE.

This sequence belongs to the methyltransferase superfamily. RNA methyltransferase RsmG family.

The protein localises to the cytoplasm. Specifically methylates the N7 position of guanine in position 518 of 16S rRNA. The polypeptide is Ribosomal RNA small subunit methyltransferase G (Renibacterium salmoninarum (strain ATCC 33209 / DSM 20767 / JCM 11484 / NBRC 15589 / NCIMB 2235)).